A 102-amino-acid polypeptide reads, in one-letter code: Small ribosomal subunit protein uS10 (102 aa).

This sequence belongs to the universal ribosomal protein uS10 family. In terms of assembly, part of the 30S ribosomal subunit.

In terms of biological role, involved in the binding of tRNA to the ribosomes. The sequence is that of Small ribosomal subunit protein uS10 from Sulfolobus acidocaldarius (strain ATCC 33909 / DSM 639 / JCM 8929 / NBRC 15157 / NCIMB 11770).